We begin with the raw amino-acid sequence, 558 residues long: Putative transport protein VC0395_A0715/VC395_1212 (558 aa).

The next 5 helical transmembrane spans lie at 5 to 25 (VVLL…AIGL), 37 to 57 (LGNS…GFSF), 66 to 86 (FMLF…GIFF), 92 to 112 (YLIL…FGGY), and 164 to 184 (VGYA…AKLL). 2 RCK C-terminal domains span residues 203-290 (RGLG…FRNG) and 291-374 (KEVF…KIGF). 6 helical membrane-spanning segments follow: residues 384-404 (LLAF…TMTF), 407-427 (VSFS…LGFL), 441-461 (ALNM…GLNA), 476-496 (VIGL…LVGA), 504-524 (ALLF…DVVN), and 537-557 (AGTY…FILL).

The protein belongs to the AAE transporter (TC 2.A.81) family. YbjL subfamily.

It is found in the cell membrane. The polypeptide is Putative transport protein VC0395_A0715/VC395_1212 (Vibrio cholerae serotype O1 (strain ATCC 39541 / Classical Ogawa 395 / O395)).